The primary structure comprises 482 residues: Retinoic acid receptor beta (482 aa).

A modulating region spans residues 1–114 (MSTSSHACPV…PLPPPRVYKP (114 aa)). Serine 104 bears the Phosphoserine mark. 2 NR C4-type zinc fingers span residues 115–135 (CFVC…CEGC) and 151–175 (CHRD…LQKC). The segment at residues 115-180 (CFVCQDKSSG…RLQKCFEVGM (66 aa)) is a DNA-binding region (nuclear receptor). Residues 181–209 (SKESVRNDRNKKKKEPSKQECTESYEMTA) form a hinge region. The NR LBD domain maps to 210–444 (ELDDLTEKIR…PLIQEMLENS (235 aa)). The tract at residues 443-482 (NSEGHEPLTPSSSGNIAEHSPSVSPSSVENSGVSQSPLLQ) is disordered. The span at 462-482 (SPSVSPSSVENSGVSQSPLLQ) shows a compositional bias: low complexity.

Belongs to the nuclear hormone receptor family. NR1 subfamily. As to quaternary structure, homodimer. Heterodimer; with a RXR molecule. Binds DNA preferentially as a RAR/RXR heterodimer. Heterodimerizes (via NR LBD) with RXRA. Interacts weakly with NCOR2.

The protein resides in the nucleus. It localises to the cytoplasm. Its function is as follows. Receptor for retinoic acid. Retinoic acid receptors bind as heterodimers to their target response elements in response to their ligands, all-trans or 9-cis retinoic acid, and regulate gene expression in various biological processes. The RAR/RXR heterodimers bind to the retinoic acid response elements (RARE) composed of tandem 5'-AGGTCA-3' sites known as DR1-DR5. In the absence of ligand, acts mainly as an activator of gene expression due to weak binding to corepressors. The RXRA/RARB heterodimer can act as a repressor on the DR1 element and as an activator on the DR5 element. In concert with RARG, required for skeletal growth, matrix homeostasis and growth plate function. This is Retinoic acid receptor beta (Rarb) from Mus musculus (Mouse).